A 75-amino-acid polypeptide reads, in one-letter code: DNA-directed RNA polymerase subunit omega (75 aa).

Belongs to the RNA polymerase subunit omega family. As to quaternary structure, in cyanobacteria the RNAP catalytic core is composed of 2 alpha, 1 beta, 1 beta', 1 gamma and 1 omega subunit. When a sigma factor is associated with the core the holoenzyme is formed, which can initiate transcription.

It carries out the reaction RNA(n) + a ribonucleoside 5'-triphosphate = RNA(n+1) + diphosphate. Promotes RNA polymerase assembly. Latches the N- and C-terminal regions of the beta' subunit thereby facilitating its interaction with the beta and alpha subunits. The sequence is that of DNA-directed RNA polymerase subunit omega from Synechococcus sp. (strain WH7803).